Consider the following 132-residue polypeptide: Small ribosomal subunit protein uS8 (132 aa).

This sequence belongs to the universal ribosomal protein uS8 family. In terms of assembly, part of the 30S ribosomal subunit. Contacts proteins S5 and S12.

Its function is as follows. One of the primary rRNA binding proteins, it binds directly to 16S rRNA central domain where it helps coordinate assembly of the platform of the 30S subunit. The sequence is that of Small ribosomal subunit protein uS8 (rpsH) from Caldanaerobacter subterraneus subsp. tengcongensis (strain DSM 15242 / JCM 11007 / NBRC 100824 / MB4) (Thermoanaerobacter tengcongensis).